The primary structure comprises 371 residues: Protein lifeguard 1 (371 aa).

A disordered region spans residues 1 to 145 (MSHEKSFLVS…EGPPSYYDNQ (145 aa)). Residues 14-49 (YPPPNPGYPGGPQPPMPPYAQPPYPGAPYPQPPFQP) are compositionally biased toward pro residues. A compositionally biased stretch (low complexity) spans 84–98 (YPQEGYPQGPYPQGG). Residues 102 to 114 (GPYPQSPFPPNPY) show a composition bias toward pro residues. The next 7 helical transmembrane spans lie at 165–185 (VFLV…VFTF), 197–217 (VWTY…LSCC), 228–248 (LVAL…IASF), 253–273 (AVIM…IFSM), 283–303 (MGVL…CIFI), 307–327 (ILEI…LAVD), and 346–366 (FAAL…LTII).

The protein belongs to the BI1 family. LFG subfamily.

It localises to the membrane. Functionally, potential apoptotic regulator. The polypeptide is Protein lifeguard 1 (GRINA) (Homo sapiens (Human)).